Here is a 306-residue protein sequence, read N- to C-terminus: Phospho-N-acetylmuramoyl-pentapeptide-transferase (306 aa).

10 helical membrane passes run 2–22 (IALL…LKYW), 47–67 (SGTP…FLFF), 71–91 (FFIS…DLKL), 105–125 (IFLS…DYKI), 131–151 (LIID…IAVP), 162–182 (GLAG…SFHF), 185–205 (IALE…FNSH), 209–229 (IFMG…LSVV), 236–256 (LIFL…QVFF), and 284–304 (IVWR…VLWY).

It belongs to the glycosyltransferase 4 family. MraY subfamily. It depends on Mg(2+) as a cofactor.

The protein localises to the cell inner membrane. It catalyses the reaction UDP-N-acetyl-alpha-D-muramoyl-L-alanyl-gamma-D-glutamyl-meso-2,6-diaminopimeloyl-D-alanyl-D-alanine + di-trans,octa-cis-undecaprenyl phosphate = di-trans,octa-cis-undecaprenyl diphospho-N-acetyl-alpha-D-muramoyl-L-alanyl-D-glutamyl-meso-2,6-diaminopimeloyl-D-alanyl-D-alanine + UMP. It functions in the pathway cell wall biogenesis; peptidoglycan biosynthesis. Functionally, catalyzes the initial step of the lipid cycle reactions in the biosynthesis of the cell wall peptidoglycan: transfers peptidoglycan precursor phospho-MurNAc-pentapeptide from UDP-MurNAc-pentapeptide onto the lipid carrier undecaprenyl phosphate, yielding undecaprenyl-pyrophosphoryl-MurNAc-pentapeptide, known as lipid I. The polypeptide is Phospho-N-acetylmuramoyl-pentapeptide-transferase (Dictyoglomus thermophilum (strain ATCC 35947 / DSM 3960 / H-6-12)).